The primary structure comprises 227 residues: Cytochrome c oxidase subunit 2 (227 aa).

Residues 1 to 14 (MAHPAQLGLQDATS) are Mitochondrial intermembrane-facing. A helical transmembrane segment spans residues 15-45 (PVMEELITFHDHALMAMSLISLLVLYALFST). Residues 46–59 (LTTKMTNTNITDAQ) are Mitochondrial matrix-facing. A helical membrane pass occupies residues 60–87 (EMETIWTILPAIILVLIAFPSLRILYMT). The Mitochondrial intermembrane segment spans residues 88–227 (DEVNNPSFTI…IFEMGPVFTL (140 aa)). His161, Cys196, Glu198, Cys200, His204, and Met207 together coordinate Cu cation. Glu198 is a Mg(2+) binding site.

The protein belongs to the cytochrome c oxidase subunit 2 family. In terms of assembly, component of the cytochrome c oxidase (complex IV, CIV), a multisubunit enzyme composed of 14 subunits. The complex is composed of a catalytic core of 3 subunits MT-CO1, MT-CO2 and MT-CO3, encoded in the mitochondrial DNA, and 11 supernumerary subunits COX4I, COX5A, COX5B, COX6A, COX6B, COX6C, COX7A, COX7B, COX7C, COX8 and NDUFA4, which are encoded in the nuclear genome. The complex exists as a monomer or a dimer and forms supercomplexes (SCs) in the inner mitochondrial membrane with NADH-ubiquinone oxidoreductase (complex I, CI) and ubiquinol-cytochrome c oxidoreductase (cytochrome b-c1 complex, complex III, CIII), resulting in different assemblies (supercomplex SCI(1)III(2)IV(1) and megacomplex MCI(2)III(2)IV(2)). Found in a complex with TMEM177, COA6, COX18, COX20, SCO1 and SCO2. Interacts with TMEM177 in a COX20-dependent manner. Interacts with COX20. Interacts with COX16. Cu cation serves as cofactor.

It is found in the mitochondrion inner membrane. The catalysed reaction is 4 Fe(II)-[cytochrome c] + O2 + 8 H(+)(in) = 4 Fe(III)-[cytochrome c] + 2 H2O + 4 H(+)(out). Functionally, component of the cytochrome c oxidase, the last enzyme in the mitochondrial electron transport chain which drives oxidative phosphorylation. The respiratory chain contains 3 multisubunit complexes succinate dehydrogenase (complex II, CII), ubiquinol-cytochrome c oxidoreductase (cytochrome b-c1 complex, complex III, CIII) and cytochrome c oxidase (complex IV, CIV), that cooperate to transfer electrons derived from NADH and succinate to molecular oxygen, creating an electrochemical gradient over the inner membrane that drives transmembrane transport and the ATP synthase. Cytochrome c oxidase is the component of the respiratory chain that catalyzes the reduction of oxygen to water. Electrons originating from reduced cytochrome c in the intermembrane space (IMS) are transferred via the dinuclear copper A center (CU(A)) of subunit 2 and heme A of subunit 1 to the active site in subunit 1, a binuclear center (BNC) formed by heme A3 and copper B (CU(B)). The BNC reduces molecular oxygen to 2 water molecules using 4 electrons from cytochrome c in the IMS and 4 protons from the mitochondrial matrix. This is Cytochrome c oxidase subunit 2 (MT-CO2) from Mandrillus leucophaeus (Drill).